The chain runs to 176 residues: ATP-dependent protease subunit HslV (176 aa).

The active site involves threonine 5. 3 residues coordinate Na(+): alanine 161, cysteine 164, and threonine 167.

It belongs to the peptidase T1B family. HslV subfamily. A double ring-shaped homohexamer of HslV is capped on each side by a ring-shaped HslU homohexamer. The assembly of the HslU/HslV complex is dependent on binding of ATP.

The protein localises to the cytoplasm. The enzyme catalyses ATP-dependent cleavage of peptide bonds with broad specificity.. Its activity is regulated as follows. Allosterically activated by HslU binding. Its function is as follows. Protease subunit of a proteasome-like degradation complex believed to be a general protein degrading machinery. This is ATP-dependent protease subunit HslV from Caldicellulosiruptor bescii (strain ATCC BAA-1888 / DSM 6725 / KCTC 15123 / Z-1320) (Anaerocellum thermophilum).